We begin with the raw amino-acid sequence, 209 residues long: Ferritin heavy chain (209 aa).

Residues 1-27 (MMKSVFFGVVAITVAILSIYQETAQAQ) form the signal peptide. A Ferritin-like diiron domain is found at 40–193 (DSVDDQCLAA…EKIATLKKMK (154 aa)). The Fe cation site is built by Glu57, Glu92, His95, Glu140, and Gln175.

The protein belongs to the ferritin family. As to quaternary structure, oligomer of 24 subunits. There are two types of subunits: L (light) chain and H (heavy) chain. The functional molecule forms a roughly spherical shell with a diameter of 12 nm and contains a central cavity into which the insoluble mineral iron core is deposited.

It localises to the secreted. Its subcellular location is the cytoplasm. It catalyses the reaction 4 Fe(2+) + O2 + 4 H(+) = 4 Fe(3+) + 2 H2O. Its function is as follows. Stores iron in a soluble, non-toxic, readily available form. Important for iron homeostasis. Has ferroxidase activity. Iron is taken up in the ferrous form and deposited as ferric hydroxides after oxidation. The protein is Ferritin heavy chain (FERH) of Aedes aegypti (Yellowfever mosquito).